Consider the following 673-residue polypeptide: Protein kinase C delta type (673 aa).

A C2 domain is found at Met1–Leu106. Residues Thr43 and Thr50 each carry the phosphothreonine modification. Tyr64 is subject to Phosphotyrosine. Residue Ser130 is modified to Phosphoserine. Phosphothreonine is present on Thr141. Position 155 is a phosphotyrosine (Tyr155). Residues Asn158–Cys208 form a Phorbol-ester/DAG-type 1 zinc finger. Thr218 is modified (phosphothreonine). The segment at Pro230 to Cys280 adopts a Phorbol-ester/DAG-type 2 zinc-finger fold. Phosphoserine; by autocatalysis is present on Ser299. Phosphotyrosine; by SRC is present on residues Tyr311 and Tyr332. The 255-residue stretch at Phe347–Phe601 folds into the Protein kinase domain. Leu353–Val361 serves as a coordination point for ATP. The residue at position 372 (Tyr372) is a Phosphotyrosine. Lys376 is a binding site for ATP. At Thr449 the chain carries Phosphothreonine. The active-site Proton acceptor is the Asp471. Ser504 is modified (phosphoserine). Thr505 bears the Phosphothreonine; by autocatalysis mark. A Phosphotyrosine modification is found at Tyr565. Residues Lys602–Glu673 form the AGC-kinase C-terminal domain. Residues Ser643, Ser652, and Ser662 each carry the phosphoserine modification.

This sequence belongs to the protein kinase superfamily. AGC Ser/Thr protein kinase family. PKC subfamily. As to quaternary structure, interacts with PDPK1 (via N-terminal region). Interacts with RAD9A. Interacts with CDCP1. Interacts with MUC1. Interacts with VASP. Interacts with CAVIN3. Interacts with PRKD2 (via N-terminus and zing-finger domain 1 and 2) in response to oxidative stress; the interaction is independent of PRKD2 tyrosine phosphorylation. Interacts with PLSC3; interaction is enhanced by UV irradiation. Post-translationally, autophosphorylated and/or phosphorylated at Thr-505, within the activation loop; phosphorylation at Thr-505 is not a prerequisite for enzymatic activity. Autophosphorylated at Ser-299. Upon TNFSF10/TRAIL treatment, phosphorylated at Tyr-155; phosphorylation is required for its translocation to the endoplasmic reticulum and cleavage by caspase-3. Phosphorylated at Tyr-311, Tyr-332 and Tyr-565; phosphorylation of Tyr-311 and Tyr-565 following thrombin or zymosan stimulation potentiates its kinase activity. Phosphorylated by protein kinase PDPK1; phosphorylation is inhibited by the apoptotic C-terminal cleavage product of PKN2. Phosphorylated at Tyr-311 and Tyr-332 by SRC; phosphorylation leads to enhanced autophosphorylation at Thr-505. Phosphorylated at Tyr-311 through a SYK and SRC mechanism downstream of C-type lectin receptors activation, promoting its activation. Proteolytically cleaved into a catalytic subunit and a regulatory subunit by caspase-3 during apoptosis which results in kinase activation.

It localises to the cytoplasm. The protein localises to the nucleus. Its subcellular location is the perinuclear region. The protein resides in the cell membrane. It is found in the mitochondrion. It localises to the endomembrane system. It catalyses the reaction L-seryl-[protein] + ATP = O-phospho-L-seryl-[protein] + ADP + H(+). The catalysed reaction is L-threonyl-[protein] + ATP = O-phospho-L-threonyl-[protein] + ADP + H(+). The enzyme catalyses L-tyrosyl-[protein] + ATP = O-phospho-L-tyrosyl-[protein] + ADP + H(+). With respect to regulation, novel PKCs (PRKCD, PRKCE, PRKCH and PRKCQ) are calcium-insensitive, but activated by diacylglycerol (DAG) and phosphatidylserine. Three specific sites; Thr-505 (activation loop of the kinase domain), Ser-643 (turn motif) and Ser-662 (hydrophobic region), need to be phosphorylated for its full activation. Activated by caspase-3 (CASP3) cleavage during apoptosis. After cleavage, the pseudosubstrate motif in the regulatory subunit is released from the substrate recognition site of the catalytic subunit, which enables PRKCD to become constitutively activated. The catalytic subunit which displays properties of a sphingosine-dependent protein kinase is activated by D-erythro-sphingosine (Sph) or N,N-dimethyl-D-erythrosphingosine (DMS) or N,N,N-trimethyl-D-erythrosphingosine (TMS), but not by ceramide or Sph-1-P and is strongly inhibited by phosphatidylserine. Its function is as follows. Calcium-independent, phospholipid- and diacylglycerol (DAG)-dependent serine/threonine-protein kinase that plays contrasting roles in cell death and cell survival by functioning as a pro-apoptotic protein during DNA damage-induced apoptosis, but acting as an anti-apoptotic protein during cytokine receptor-initiated cell death, is involved in tumor suppression, is required for oxygen radical production by NADPH oxidase and acts as a positive or negative regulator in platelet functional responses. Upon DNA damage, activates the promoter of the death-promoting transcription factor BCLAF1/Btf to trigger BCLAF1-mediated p53/TP53 gene transcription and apoptosis. In response to oxidative stress, interact with and activate CHUK/IKKA in the nucleus, causing the phosphorylation of p53/TP53. In the case of ER stress or DNA damage-induced apoptosis, can form a complex with the tyrosine-protein kinase ABL1 which trigger apoptosis independently of p53/TP53. In cytosol can trigger apoptosis by activating MAPK11 or MAPK14, inhibiting AKT1 and decreasing the level of X-linked inhibitor of apoptosis protein (XIAP), whereas in nucleus induces apoptosis via the activation of MAPK8 or MAPK9. Upon ionizing radiation treatment, is required for the activation of the apoptosis regulators BAX and BAK, which trigger the mitochondrial cell death pathway. Can phosphorylate MCL1 and target it for degradation which is sufficient to trigger for BAX activation and apoptosis. Is required for the control of cell cycle progression both at G1/S and G2/M phases. Mediates phorbol 12-myristate 13-acetate (PMA)-induced inhibition of cell cycle progression at G1/S phase by up-regulating the CDK inhibitor CDKN1A/p21 and inhibiting the cyclin CCNA2 promoter activity. In response to UV irradiation can phosphorylate CDK1, which is important for the G2/M DNA damage checkpoint activation. Can protect glioma cells from the apoptosis induced by TNFSF10/TRAIL, probably by inducing increased phosphorylation and subsequent activation of AKT1. Can also act as tumor suppressor upon mitogenic stimulation with PMA or TPA. In N-formyl-methionyl-leucyl-phenylalanine (fMLP)-treated cells, is required for NCF1 (p47-phox) phosphorylation and activation of NADPH oxidase activity, and regulates TNF-elicited superoxide anion production in neutrophils, by direct phosphorylation and activation of NCF1 or indirectly through MAPK1/3 (ERK1/2) signaling pathways. Involved in antifungal immunity by mediating phosphorylation and activation of CARD9 downstream of C-type lectin receptors activation, promoting interaction between CARD9 and BCL10, followed by activation of NF-kappa-B and MAP kinase p38 pathways. May also play a role in the regulation of NADPH oxidase activity in eosinophil after stimulation with IL5, leukotriene B4 or PMA. In collagen-induced platelet aggregation, acts a negative regulator of filopodia formation and actin polymerization by interacting with and negatively regulating VASP phosphorylation. Downstream of PAR1, PAR4 and CD36/GP4 receptors, regulates differentially platelet dense granule secretion; acts as a positive regulator in PAR-mediated granule secretion, whereas it negatively regulates CD36/GP4-mediated granule release. Phosphorylates MUC1 in the C-terminal and regulates the interaction between MUC1 and beta-catenin. The catalytic subunit phosphorylates 14-3-3 proteins (YWHAB, YWHAZ and YWHAH) in a sphingosine-dependent fashion. Phosphorylates ELAVL1 in response to angiotensin-2 treatment. Phosphorylates mitochondrial phospholipid scramblase 3 (PLSCR3), resulting in increased cardiolipin expression on the mitochondrial outer membrane which facilitates apoptosis. Phosphorylates SMPD1 which induces SMPD1 secretion. Functionally, truncated isoform 2 is inactive. This Rattus norvegicus (Rat) protein is Protein kinase C delta type.